Consider the following 63-residue polypeptide: MPKMKTKKSLAKRVTVKSNGTLKRAKAYRSHRATGKTTKQKRQLSKATIISKVDMKNLKGLLQ.

Residues 24-44 (RAKAYRSHRATGKTTKQKRQL) form a disordered region.

Belongs to the bacterial ribosomal protein bL35 family.

This Mycoplasma mycoides subsp. mycoides SC (strain CCUG 32753 / NCTC 10114 / PG1) protein is Large ribosomal subunit protein bL35.